The following is a 137-amino-acid chain: Methylglyoxal synthase (137 aa).

Positions 1–137 constitute an MGS-like domain; sequence MNIALVAHDQ…EVRKSKSQRI (137 aa). Residues histidine 8, lysine 12, 34-37, and 54-55 contribute to the substrate site; these read TGTT and SG. Aspartate 60 acts as the Proton donor/acceptor in catalysis. Residue histidine 87 coordinates substrate.

Belongs to the methylglyoxal synthase family.

The enzyme catalyses dihydroxyacetone phosphate = methylglyoxal + phosphate. Catalyzes the formation of methylglyoxal from dihydroxyacetone phosphate. This chain is Methylglyoxal synthase, found in Clostridioides difficile (strain 630) (Peptoclostridium difficile).